The following is a 356-amino-acid chain: CMP-sialic acid transporter 2 (356 aa).

Residues 1 to 24 (MEYRRVKDQESYDVVSQKDIESPG) are compositionally biased toward basic and acidic residues. The disordered stretch occupies residues 1–43 (MEYRRVKDQESYDVVSQKDIESPGERSLSSTSATSSLSTAGAS). Residues 1 to 52 (MEYRRVKDQESYDVVSQKDIESPGERSLSSTSATSSLSTAGASKGNNSWKLK) are Cytoplasmic-facing. The span at 27 to 43 (SLSSTSATSSLSTAGAS) shows a compositional bias: low complexity. The helical transmembrane segment at 53–73 (SIVTLALTLLTSSQAILIVWS) threads the bilayer. At 74-82 (KRAGKYEYS) the chain is on the lumenal side. Residues 83–103 (VTTANFSVEALKCLLSLIALY) traverse the membrane as a helical segment. Residues 104-125 (RTWNSQGVTEDNRLSTSFDEVS) lie on the Cytoplasmic side of the membrane. Residues 126–146 (VYPIPAILYMVKNLLQYYIFA) form a helical membrane-spanning segment. Residues 147-149 (YVD) are Lumenal-facing. The chain crosses the membrane as a helical span at residues 150-172 (APAYQILKNLNIISTGVLYRIIL). Residues 173 to 175 (KKK) lie on the Cytoplasmic side of the membrane. Residues 176–196 (LSEIQWAAFILLCAGCTTAQL) form a helical membrane-spanning segment. The Lumenal portion of the chain corresponds to 197-211 (NPSSDHVLQTPIQGW). The chain crosses the membrane as a helical span at residues 212–232 (VMAIVMALLSGFAGVYTEAII). Residues 233-239 (KKRPSRN) are Cytoplasmic-facing. The helical transmembrane segment at 240–260 (INVQNFWLYIFGMLFNLVAIC) threads the bilayer. The Lumenal portion of the chain corresponds to 261–277 (VQDFDAVMNKGFFHGYS). A helical membrane pass occupies residues 278–298 (FITVLMILNHALSGIAVSMVM). The Cytoplasmic portion of the chain corresponds to 299–314 (KYADNIVKVYSTSVAM). The chain crosses the membrane as a helical span at residues 315 to 335 (LLTAVVSVFLFGFHLSLAFFL). Topologically, residues 336-356 (GSTVVSVSVYLHSVGKPQPQK) are lumenal.

This sequence belongs to the nucleotide-sugar transporter family. CMP-Sialate:CMP antiporter (TC 2.A.7.12) subfamily.

The protein localises to the golgi apparatus membrane. Sugar transporter involved in the transport of CMP-sialic acid from the cytoplasm into the Golgi. May transport important nucleotide sugars such as CMP-Kdo (2-keto-3-deoxy-D-manno-octulosonic acid) in physiological conditions. The sequence is that of CMP-sialic acid transporter 2 from Oryza sativa subsp. indica (Rice).